Reading from the N-terminus, the 295-residue chain is Pantothenate synthetase (295 aa).

30–37 (MGNLHDGH) contributes to the ATP binding site. The active-site Proton donor is the His-37. Gln-61 is a (R)-pantoate binding site. Gln-61 is a binding site for beta-alanine. Residue 149–152 (GEKD) coordinates ATP. Gln-155 is a (R)-pantoate binding site. ATP is bound by residues Val-178 and 186-189 (MSSR).

This sequence belongs to the pantothenate synthetase family. As to quaternary structure, homodimer.

Its subcellular location is the cytoplasm. The enzyme catalyses (R)-pantoate + beta-alanine + ATP = (R)-pantothenate + AMP + diphosphate + H(+). Its pathway is cofactor biosynthesis; (R)-pantothenate biosynthesis; (R)-pantothenate from (R)-pantoate and beta-alanine: step 1/1. In terms of biological role, catalyzes the condensation of pantoate with beta-alanine in an ATP-dependent reaction via a pantoyl-adenylate intermediate. The chain is Pantothenate synthetase from Photobacterium profundum (strain SS9).